We begin with the raw amino-acid sequence, 154 residues long: UPF0225 protein YpsIP31758_1970 (154 aa).

The protein belongs to the UPF0225 family.

The polypeptide is UPF0225 protein YpsIP31758_1970 (Yersinia pseudotuberculosis serotype O:1b (strain IP 31758)).